Reading from the N-terminus, the 547-residue chain is Glucose-6-phosphate isomerase (547 aa).

Glu351 acts as the Proton donor in catalysis. Catalysis depends on residues His382 and Lys509.

The protein belongs to the GPI family.

The protein resides in the cytoplasm. It carries out the reaction alpha-D-glucose 6-phosphate = beta-D-fructose 6-phosphate. Its pathway is carbohydrate biosynthesis; gluconeogenesis. It participates in carbohydrate degradation; glycolysis; D-glyceraldehyde 3-phosphate and glycerone phosphate from D-glucose: step 2/4. Functionally, catalyzes the reversible isomerization of glucose-6-phosphate to fructose-6-phosphate. This is Glucose-6-phosphate isomerase from Coxiella burnetii (strain Dugway 5J108-111).